We begin with the raw amino-acid sequence, 76 residues long: Omega-agatoxin-Aa3b (76 aa).

Disulfide bonds link Cys2-Cys19, Cys9-Cys25, Cys16-Cys52, Cys18-Cys40, Cys27-Cys38, and Cys59-Cys67.

The protein belongs to the neurotoxin 04 (omega-agtx) family. 03 (type II/III omega-agtx) subfamily. As to expression, expressed by the venom gland.

The protein resides in the secreted. Functionally, omega-agatoxins are antagonists of voltage-gated calcium channels. This toxin blocks calcium channels in insect central neurons but not at peripheral neuromuscular junctions. In vertebrates, it is broadly active against all high-threshold Cav1/CACNA1 channels and Cav2.2/CACNA1B channels. The protein is Omega-agatoxin-Aa3b of Agelenopsis aperta (North American funnel-web spider).